Reading from the N-terminus, the 67-residue chain is Large ribosomal subunit protein bL35 (67 aa).

The protein belongs to the bacterial ribosomal protein bL35 family.

This is Large ribosomal subunit protein bL35 from Synechocystis sp. (strain ATCC 27184 / PCC 6803 / Kazusa).